The following is a 287-amino-acid chain: ATP synthase gamma chain (287 aa).

It belongs to the ATPase gamma chain family. F-type ATPases have 2 components, CF(1) - the catalytic core - and CF(0) - the membrane proton channel. CF(1) has five subunits: alpha(3), beta(3), gamma(1), delta(1), epsilon(1). CF(0) has three main subunits: a, b and c.

It localises to the cell inner membrane. In terms of biological role, produces ATP from ADP in the presence of a proton gradient across the membrane. The gamma chain is believed to be important in regulating ATPase activity and the flow of protons through the CF(0) complex. This Azotobacter vinelandii (strain DJ / ATCC BAA-1303) protein is ATP synthase gamma chain.